We begin with the raw amino-acid sequence, 410 residues long: Chitin deacetylase 3 (410 aa).

The N-terminal stretch at 1 to 18 (MYGHLSLSTLSLLAVVAA) is a signal peptide. The propeptide occupies 19–39 (APFHESWLQPRDSDVSQLFRR). Asn61 and Asn80 each carry an N-linked (GlcNAc...) asparagine glycan. In terms of domain architecture, NodB homology spans 124–314 (KVWALSFDDG…KAVANGWSVK (191 aa)). The active-site Proton acceptor is the Asp131. Asp131 serves as a coordination point for acetate. Position 132 (Asp132) interacts with Co(2+). N-linked (GlcNAc...) asparagine glycosylation is present at Asn149. Residues His183 and His187 each contribute to the Co(2+) site. Position 225 (Tyr225) interacts with acetate. Residue Asn279 is glycosylated (N-linked (GlcNAc...) asparagine). His289 (proton donor) is an active-site residue. Asn293 carries an N-linked (GlcNAc...) asparagine glycan. The GPI-anchor amidated serine moiety is linked to residue Ser385. A propeptide spans 386–410 (SSWPIANRPSLFVIACGLALAAIMV) (removed in mature form).

The protein belongs to the polysaccharide deacetylase family. It depends on Co(2+) as a cofactor.

It localises to the cell membrane. It carries out the reaction [(1-&gt;4)-N-acetyl-beta-D-glucosaminyl](n) + n H2O = chitosan + n acetate. Hydrolyzes the N-acetamido groups of N-acetyl-D-glucosamine residues in chitin to form chitosan and acetate. Chitosan is required to anchor melanin to the cell wall, for maintenance of cell wall integrity, and for proper cytokinesis. Chitosan offers an advantage during infection as it is less readily detected than chitin by host immunosurveillance mechanisms. The chain is Chitin deacetylase 3 from Cryptococcus neoformans var. neoformans serotype D (strain B-3501A) (Filobasidiella neoformans).